A 357-amino-acid polypeptide reads, in one-letter code: RNA-binding protein 43 (357 aa).

The 90-residue stretch at 15 to 104 folds into the RRM domain; that stretch reads RTVVVAGLPV…VSLRVSHFGD (90 aa).

This Homo sapiens (Human) protein is RNA-binding protein 43 (RBM43).